The sequence spans 82 residues: UPF0291 protein PEPE_0871 (82 aa).

The protein belongs to the UPF0291 family.

The protein resides in the cytoplasm. The chain is UPF0291 protein PEPE_0871 from Pediococcus pentosaceus (strain ATCC 25745 / CCUG 21536 / LMG 10740 / 183-1w).